A 282-amino-acid polypeptide reads, in one-letter code: MALKYYKPTTNGRRHMSSLDFGANLTTNKPEKSLLTILKKHSGRNSQGKITVRHQGGRHKRKYRLIDFKRNKDDIPGIVKTIEYDPNRSANIALISYIDGEKRYILAPKNLKVGQKISSGPKSDILVGNALPLAKIPEGTFVHNIELKPGAGAKLIRSAGTWAQIQGRDEDGKYVILKLKSGEYRRILATCRATIGVVGNEENSLVNIGKAGRNRHKGIRPTVRGSVMNPNDHPHGGGEGKQPIGRKSPLTPWGKKALGVKTRNPKKPSTKLIIRSRKETKK.

Residues 215–282 (RHKGIRPTVR…IIRSRKETKK (68 aa)) are disordered. Positions 263-282 (RNPKKPSTKLIIRSRKETKK) are enriched in basic residues.

It belongs to the universal ribosomal protein uL2 family. As to quaternary structure, part of the 50S ribosomal subunit. Forms a bridge to the 30S subunit in the 70S ribosome.

Its function is as follows. One of the primary rRNA binding proteins. Required for association of the 30S and 50S subunits to form the 70S ribosome, for tRNA binding and peptide bond formation. It has been suggested to have peptidyltransferase activity; this is somewhat controversial. Makes several contacts with the 16S rRNA in the 70S ribosome. In Mesomycoplasma hyopneumoniae (strain 7448) (Mycoplasma hyopneumoniae), this protein is Large ribosomal subunit protein uL2.